We begin with the raw amino-acid sequence, 707 residues long: Terpene cyclase/mutase atnI (707 aa).

Positions M1–T20 are enriched in polar residues. Residues M1–G22 form a disordered region. PFTB repeat units follow at residues A130–G173, L494–T535, T571–A608, and S620–A661.

The protein belongs to the terpene cyclase/mutase family.

It participates in secondary metabolite biosynthesis; terpenoid biosynthesis. Its function is as follows. Terpene cyclase/mutase; part of the gene cluster that mediates the biosynthesis of the meroterpenoids arthripenoids. The pathway begins with the HR-PKS atnH that catalyzes two chain-extension steps to form a reduced triketide, which then primes the SAT domain in the NR-PKS atnG to initiate three more cycles of extension to give a linear hexaketide corresponding to the polyketide part of arthripenoids. The FAD-dependent monooxygenase atnJ then performs an oxidative decarboxylation at C11 of the atnH/atnG product, via an electrophilic aromatic hydroxylation with concomitant ipso-decarboxylation. The membrane-bound polyprenyl transferase atnF then introduces a farnesyl group before the FAD-dependent monooxygenase atnK functions as the first epoxidase on terminal C12'-C13' olefin, followed by a second epoxidation on C7'-C8' catalyzed by atnA. The terpene cyclase/mutase atnI then initiates the sequential tricyclic ring formation through protonation of the terminal epoxide and catalyzes the regioselective and stereoselective 6/6/6-tricyclic ring formation. The cytochrome P450 monooxygenase atnM is responsible for hydroxylating both C1' and C10'. The next steps may involve ketoreduction and acetyl transfer by the ketoreductase atnB and the acetyltransferase atnC, and lead to the production of arthripenoid B, the final biosynthetic product of the atn cluster. The hydroquinone moiety in arthripenoid B is prone to undergo spontaneous oxidation to afford a benzoquinone compound, a key intermediate for generating structure diversity. For instance, addition of a cysteine followed by ring contraction gives arthripenoid A, tautomerization gives the main product arthripenoid C, addition of a molecular of water or amine affords arthripenoid D or E, respectively, and loss of one water forms arthripenoid F. The protein is Terpene cyclase/mutase atnI of Arthrinium sp.